We begin with the raw amino-acid sequence, 482 residues long: tRNA sulfurtransferase (482 aa).

Residues 61–165 (LAIRDALTRI…DDRLLLIKGR (105 aa)) enclose the THUMP domain. ATP is bound by residues 183-184 (LI), lysine 265, glycine 287, and glutamine 296. Cysteines 344 and 456 form a disulfide. Positions 404–482 (FGPNDVILDI…GFQNVKVYRP (79 aa)) constitute a Rhodanese domain. Cysteine 456 serves as the catalytic Cysteine persulfide intermediate.

The protein belongs to the ThiI family.

It localises to the cytoplasm. It carries out the reaction [ThiI sulfur-carrier protein]-S-sulfanyl-L-cysteine + a uridine in tRNA + 2 reduced [2Fe-2S]-[ferredoxin] + ATP + H(+) = [ThiI sulfur-carrier protein]-L-cysteine + a 4-thiouridine in tRNA + 2 oxidized [2Fe-2S]-[ferredoxin] + AMP + diphosphate. The enzyme catalyses [ThiS sulfur-carrier protein]-C-terminal Gly-Gly-AMP + S-sulfanyl-L-cysteinyl-[cysteine desulfurase] + AH2 = [ThiS sulfur-carrier protein]-C-terminal-Gly-aminoethanethioate + L-cysteinyl-[cysteine desulfurase] + A + AMP + 2 H(+). It functions in the pathway cofactor biosynthesis; thiamine diphosphate biosynthesis. Functionally, catalyzes the ATP-dependent transfer of a sulfur to tRNA to produce 4-thiouridine in position 8 of tRNAs, which functions as a near-UV photosensor. Also catalyzes the transfer of sulfur to the sulfur carrier protein ThiS, forming ThiS-thiocarboxylate. This is a step in the synthesis of thiazole, in the thiamine biosynthesis pathway. The sulfur is donated as persulfide by IscS. The protein is tRNA sulfurtransferase of Citrobacter koseri (strain ATCC BAA-895 / CDC 4225-83 / SGSC4696).